The following is a 471-amino-acid chain: Ammonium transporter Rh type B (471 aa).

Over 1–13 (MAGSPSRAAGRRL) the chain is Cytoplasmic. A helical membrane pass occupies residues 14 to 33 (QLPLLSFLQGATAVLFAVFV). Over 34-60 (RYNHKTDAALWHRGNHSNADNEFYFRY) the chain is Extracellular. Asn48 carries N-linked (GlcNAc...) asparagine glycosylation. Residues 61–81 (PSFQDVHAMVFVGFGFLMVFL) traverse the membrane as a helical segment. Residues 82–85 (QRYG) lie on the Cytoplasmic side of the membrane. Residues 86-106 (FSSVGFTFLLAAFALQWSTLV) form a helical membrane-spanning segment. Over 107–123 (QGFLHSFHGGHIHVGVE) the chain is Extracellular. Residues 124–144 (SMINADFCAGAVLISFGAVLG) form a helical membrane-spanning segment. Over 145-148 (KTGP) the chain is Cytoplasmic. Residues 149 to 169 (AQLLLMALLEVVLFGINEFVL) form a helical membrane-spanning segment. The Extracellular segment spans residues 170–177 (LHLLGVRD). Residues 178 to 200 (AGGSMTIHTFGAYFGLVLSQVLY) traverse the membrane as a helical segment. The Cytoplasmic segment spans residues 201–217 (RPQLEKSKHRQGLYHSD). A helical transmembrane segment spans residues 218-238 (LFAMIGTIFLWIFWPSFNAAL). Over 239–249 (TSLGAGQHRTA) the chain is Extracellular. Residues 250-270 (LNTYYSLAASTLGTFALSALV) traverse the membrane as a helical segment. Over 271–280 (GEDGRLDMVH) the chain is Cytoplasmic. A helical transmembrane segment spans residues 281–301 (IQNAALAGRVVVGTSSEMMLT). Residue Pro302 is a topological domain, extracellular. Residues 303–323 (FGALAAGFLAGTVSTLGYKFF) traverse the membrane as a helical segment. Over 324–344 (TPILESKFKVQDTCGVHNLHG) the chain is Cytoplasmic. Residues 345–365 (MPGVLGVLLGVLVAGLATHEA) form a helical membrane-spanning segment. Topologically, residues 366–391 (YGDGLESVFPLIAEGQRSATSQAMYQ) are extracellular. Residues 392 to 412 (LFGLFVTLMFASVGGGLGGLL) traverse the membrane as a helical segment. The Cytoplasmic segment spans residues 413–471 (LKLPFLDSPPDSQCYEDQVHWQAPGATLSPLPTPAFQVPGEHEDKAQRPLRVEEADTQA). Residues 414–422 (KLPFLDSPP) are interaction with ANK3. Residues 427-430 (YEDQ) carry the Basolateral sorting signal motif. Residues 437–471 (GATLSPLPTPAFQVPGEHEDKAQRPLRVEEADTQA) form a disordered region. The span at 452–471 (GEHEDKAQRPLRVEEADTQA) shows a compositional bias: basic and acidic residues.

Belongs to the ammonium transporter (TC 2.A.49) family. Rh subfamily. In terms of assembly, interacts (via C-terminus) with ANK2 and ANK3; required for targeting to the basolateral membrane. Post-translationally, N-glycosylated.

The protein localises to the cell membrane. Its subcellular location is the basolateral cell membrane. It catalyses the reaction NH4(+)(in) = NH4(+)(out). It carries out the reaction methylamine(out) = methylamine(in). The catalysed reaction is CO2(out) = CO2(in). Its function is as follows. Ammonium transporter involved in the maintenance of acid-base homeostasis. Transports ammonium and its related derivative methylammonium across the basolateral plasma membrane of epithelial cells likely contributing to renal transepithelial ammonia transport and ammonia metabolism. May transport either NH4(+) or NH3 ammonia species predominantly mediating an electrogenic NH4(+) transport. May act as a CO2 channel providing for renal acid secretion. This is Ammonium transporter Rh type B (RHBG) from Pongo pygmaeus (Bornean orangutan).